Here is an 85-residue protein sequence, read N- to C-terminus: Large ribosomal subunit protein bL27 (85 aa).

A disordered region spans residues 1 to 24 (MAHKKGVGSSRNGRDSDGQRLGCK).

The protein belongs to the bacterial ribosomal protein bL27 family.

In Geotalea daltonii (strain DSM 22248 / JCM 15807 / FRC-32) (Geobacter daltonii), this protein is Large ribosomal subunit protein bL27.